A 2009-amino-acid chain; its full sequence is MEQTVLVPPGPDSFNFFTRESLAAIERRIAEEKAKNPKPDKKDDDENGPKPNSDLEAGKNLPFIYGDIPPEMVSEPLEDLDPYYINKKTFIVLNKGKAIFRFSATSALYILTPFNPLRKIAIKILVHSLFSMLIMCTILTNCVFMTMSNPPDWTKNVEYTFTGIYTFESLIKIIARGFCLEDFTFLRDPWNWLDFTVITFAYVTEFVDLGNVSALRTFRVLRALKTISVIPGLKTIVGALIQSVKKLSDVMILTVFCLSVFALIGLQLFMGNLRNKCVQWPPTNASLEEHSIEKNVTTDYNGTLVNETVFEFDWKSYIQDSRYHYFLEGVLDALLCGNSSDAGQCPEGYMCVKAGRNPNYGYTSFDTFSWAFLSLFRLMTQDFWENLYQLTLRAAGKTYMIFFVLVIFLGSFYLINLILAVVAMAYEEQNQATLEEAEQKEAEFQQMLEQLKKQQEAAQQAAAATASEHSREPSAAGRLSDSSSEASKLSSKSAKERRNRRKKRKQKEQSGGEEKDDDEFHKSESEDSIRRKGFRFSIEGNRLTYEKRYSSPHQSLLSIRGSLFSPRRNSRTSLFSFRGRAKDVGSENDFADDEHSTFEDNESRRDSLFVPRRHGERRNSNLSQTSRSSRMLAGLPANGKMHSTVDCNGVVSLVGGPSVPTSPVGQLLPEVIIDKPATDDNGTTTETEMRKRRSSSFHVSMDFLEDPSQRQRAMSIASILTNTVEELEESRQKCPPCWYKFSNIFLIWDCSPYWLKVKHIVNLVVMDPFVDLAITICIVLNTLFMAMEHYPMTEHFNHVLTVGNLVFTGIFTAEMFLKIIAMDPYYYFQEGWNIFDGFIVTLSLVELGLANVEGLSVLRSFRLLRVFKLAKSWPTLNMLIKIIGNSVGALGNLTLVLAIIVFIFAVVGMQLFGKSYKDCVCKIATDCKLPRWHMNDFFHSFLIVFRVLCGEWIETMWDCMEVAGQAMCLTVFMMVMVIRNLVVLNLFLALLLSSFSADNLAATDDDNEMNNLQIAVDRMHKGVAYVKRKIYEFIQQSFVRKQKILDEIKPLDDLNNRKDNCTSNHTTEIGKDLDCLKDVNGTTSGIGTGSSVEKYIIDESDYMSFINNPSLTVTVPIAVGESDFENLNTEDFSSESDLEESKEKLNESSSSSEGSTVDIGAPAEEQPVMEPEETLEPEACFTEGCVQRFKCCQISVEEGRGKQWWNLRRTCFRIVEHNWFETFIVFMILLSSGALAFEDIYIDQRKTIKTMLEYADKVFTYIFILEMLLKWVAYGYQTYFTNAWCWLDFLIVDVSLVSLTANALGYSELGAIKSLRTLRALRPLRALSRFEGMRVVVNALLGAIPSIMNVLLVCLIFWLIFSIMGVNLFAGKFYHCVNTTTGDTFEITEVNNHSDCLKLIERNETARWKNVKVNFDNVGFGYLSLLQVATFKGWMDIMYAAVDSRNVELQPKYEESLYMYLYFVIFIIFGSFFTLNLFIGVIIDNFNQQKKKFGGQDIFMTEEQKKYYNAMKKLGSKKPQKPIPRPGNKFQGMVFDFVTRQVFDISIMILICLNMVTMMVETDDQSDYVTSILSRINLVFIVLFTGECVLKLISLRHYYFTIGWNIFDFVVVILSIVGMFLAELIEKYFVSPTLFRVIRLARIGRILRLIKGAKGIRTLLFALMMSLPALFNIGLLLFLVMFIYAIFGMSNFAYVKREVGIDDMFNFETFGNSMICLFQITTSAGWDGLLAPILNSKPPDCDPNKVNPGSSVKGDCGNPSVGIFFFVSYIIISFLVVVNMYIAVILENFSVATEESAEPLSEDDFEMFYEVWEKFDPDATQFMEFEKLSQFAAALEPPLNLPQPNKLQLIAMDLPMVSGDRIHCLDILFAFTKRVLGESGEMDALRIQMEERFMASNPSKVSYQPITTTLKRKQEEVSAVIIQRAYRRHLLKRTVKQASFTYNKNKLKGGANLLVKEDMIIDRINENSITEKTDLTMSTAACPPSYDRVTKPIVEKHEQEGKDEKAKGK.

The Cytoplasmic portion of the chain corresponds to M1 to S128. The segment covering R28 to G48 has biased composition (basic and acidic residues). Residues R28 to N60 are disordered. The I repeat unit spans residues I110–Q454. A helical membrane pass occupies residues L129–T146. Topologically, residues M147–D152 are extracellular. Residues W153 to G177 form a helical membrane-spanning segment. Residues F178–D188 lie on the Cytoplasmic side of the membrane. A helical membrane pass occupies residues P189 to E205. Residues F206 to S213 lie on the Extracellular side of the membrane. An N-linked (GlcNAc...) asparagine glycan is attached at N211. Residues A214–T235 form a helical membrane-spanning segment. The Cytoplasmic portion of the chain corresponds to I236–K245. A helical membrane pass occupies residues K246–F269. The Extracellular segment spans residues M270–S369. 2 disulfide bridges follow: C277–C345 and C336–C351. N-linked (GlcNAc...) asparagine glycosylation is found at N284, N295, N301, N306, and N338. Positions W370 to W384 form an intramembrane region, pore-forming. Over E385–K397 the chain is Extracellular. The chain crosses the membrane as a helical span at residues T398–A423. Residues M424–P768 are Cytoplasmic-facing. The interval A458–S528 is disordered. Position 470 is a phosphoserine (S470). Residues L479–K492 show a composition bias toward low complexity. A compositionally biased stretch (basic residues) spans K495 to Q506. A compositionally biased stretch (basic and acidic residues) spans K507–S528. S523, S525, S550, S551, S607, and S730 each carry phosphoserine. The disordered stretch occupies residues V584–S628. Residues D593 to S607 show a composition bias toward basic and acidic residues. The stretch at C750 to G1022 is one II repeat. The chain crosses the membrane as a helical span at residues F769 to M787. Topologically, residues E788–N797 are extracellular. A helical membrane pass occupies residues H798–I820. Topologically, residues A821–E830 are cytoplasmic. Residues G831 to L849 form a helical membrane-spanning segment. Over A850–G854 the chain is Extracellular. A helical transmembrane segment spans residues L855–P874. The Cytoplasmic portion of the chain corresponds to T875 to G891. Residues N892–F912 form a helical membrane-spanning segment. At G913–F938 the chain is on the extracellular side. A disulfide bridge links C921 with C927. Positions H939–W952 form an intramembrane region, pore-forming. Topologically, residues I953–Q965 are extracellular. C959 and C968 are joined by a disulfide. A helical membrane pass occupies residues A966–L992. The Cytoplasmic portion of the chain corresponds to S993–N1218. The tract at residues T1129–A1163 is disordered. An III repeat occupies R1200–L1514. A helical transmembrane segment spans residues W1219–F1237. Residues E1238–T1250 are Extracellular-facing. A helical membrane pass occupies residues M1251–Y1276. The Cytoplasmic portion of the chain corresponds to Q1277–T1278. A helical transmembrane segment spans residues Y1279 to L1304. The Extracellular segment spans residues G1305–K1313. Residues S1314 to G1332 traverse the membrane as a helical segment. Residues M1333 to P1345 lie on the Cytoplasmic side of the membrane. Residues S1346–F1369 traverse the membrane as a helical segment. Over A1370 to F1415 the chain is Extracellular. Residues C1376 and C1396 are joined by a disulfide bond. N-linked (GlcNAc...) asparagine glycosylation is found at N1378, N1392, and N1403. Residues D1416–G1433 constitute an intramembrane region (pore-forming). The Extracellular segment spans residues W1434–L1457. Residues Y1458–I1483 traverse the membrane as a helical segment. Topologically, residues D1484–Q1541 are cytoplasmic. Position 1516 is a phosphoserine; by PKC (S1516). The IV repeat unit spans residues I1523 to Q1821. The chain crosses the membrane as a helical span at residues V1542–V1560. Over E1561–S1571 the chain is Extracellular. An S1-S2 loop of repeat IV region spans residues E1561–S1571. Residues I1572–I1593 traverse the membrane as a helical segment. Residues S1594–T1601 lie on the Cytoplasmic side of the membrane. The helical transmembrane segment at I1602–E1623 threads the bilayer. Residues M1619 to R1636 form an S3b-S4 loop of repeat IV region. The Extracellular portion of the chain corresponds to L1624–R1636. A helical membrane pass occupies residues V1637 to G1655. Residues I1656–M1665 are Cytoplasmic-facing. The chain crosses the membrane as a helical span at residues S1666 to G1688. The Extracellular segment spans residues M1689–G1711. Residues N1712–W1726 constitute an intramembrane region (pore-forming). The Extracellular segment spans residues D1727 to P1759. Cysteines 1741 and 1756 form a disulfide. Residues S1760–N1788 form a helical membrane-spanning segment. At F1789–K2009 the chain is on the cytoplasmic side. The 30-residue stretch at E1915–K1944 folds into the IQ domain. The disordered stretch occupies residues Y1986–K2009. Residues R1988–K2009 are compositionally biased toward basic and acidic residues.

Belongs to the sodium channel (TC 1.A.1.10) family. Nav1.1/SCN1A subfamily. In terms of assembly, the Nav1.1 voltage-gated sodium channel consists of an ion-conducting alpha subunit SCN1A which is functional on its own regulated by one or more beta-1 (SCN1B), beta-2 (SCN2B), beta-3 (SCN3B) and beta-4 (SCN4B) subunits. SCN1B and SCN3B are non-covalently associated with SCN1A. SCN2B and SCN4B are disulfide-linked to SCN1A. SCN1B regulates both the expression at the plasma membrane and the voltage dependence of Nav1.1 inactivation. SCN3B and SCN4B reduce Nav1.1 conductance. Probably interacts with TMEM233; modulates the gating properties of NaV1.1. Interacts with FGF13; regulates the steady-state inactivation of Nav.1.1. Phosphorylation at Ser-1516 by PKC in a highly conserved cytoplasmic loop slows inactivation of the sodium channel and reduces peak sodium currents.

The protein resides in the cell membrane. It carries out the reaction Na(+)(in) = Na(+)(out). With respect to regulation, activated by the spider toxins Hm1a and Hm1b (H.maculata, AC P60992 and AC P0DOC5) eliciting acute pain and mechanical allodynia. Inhibited by the conotoxin GVIIJ. In terms of biological role, pore-forming subunit of Nav1.1, a voltage-gated sodium (Nav) channel that directly mediates the depolarizing phase of action potentials in excitable membranes. Navs, also called VGSCs (voltage-gated sodium channels) or VDSCs (voltage-dependent sodium channels), operate by switching between closed and open conformations depending on the voltage difference across the membrane. In the open conformation they allow Na(+) ions to selectively pass through the pore, along their electrochemical gradient. The influx of Na(+) ions provokes membrane depolarization, initiating the propagation of electrical signals throughout cells and tissues. By regulating the excitability of neurons, ensures that they respond appropriately to synaptic inputs, maintaining the balance between excitation and inhibition in brain neural circuits. Nav1.1 plays a role in controlling the excitability and action potential propagation from somatosensory neurons, thereby contributing to the sensory perception of mechanically-induced pain. The protein is Sodium channel protein type 1 subunit alpha of Rattus norvegicus (Rat).